The primary structure comprises 423 residues: MLVKADMTKDIAQVMAEVGRKAKAAAAPLSIATSEQKNKALNAAADAILEARADILEANRLDLANAEKNGMAASFVDRLTLNEARIDAIAEGIRAIATLPDPVGEVIAEWDRPNGLHIERVRTPLGVIGVIYESRPNVTADAGALCLKAGNAVILRGGSDSAHSSAAIHKALEAANLPADAIQIVPVTDRAAVGEMLKGLGGAIDVIVPRGGKSLVARVQSEARVPVFAHLEGICHLYIDKSADLDMARRIALDAKMRRTGICGAAETLLVDRAVASTHLAPILGDLAAGGCEIRGSAEVLALYPAAKPATEEDWSTEYLDAIISVALVDGISGAIDHINRYSSHHTEAIVAEDAQTVARFFNEIDSAILLHNASTQFADGGEFGMGAEIGIATGKMHARGPVGVEQLTSFKYRVRGSGQVRG.

The protein belongs to the gamma-glutamyl phosphate reductase family.

It localises to the cytoplasm. The catalysed reaction is L-glutamate 5-semialdehyde + phosphate + NADP(+) = L-glutamyl 5-phosphate + NADPH + H(+). The protein operates within amino-acid biosynthesis; L-proline biosynthesis; L-glutamate 5-semialdehyde from L-glutamate: step 2/2. Functionally, catalyzes the NADPH-dependent reduction of L-glutamate 5-phosphate into L-glutamate 5-semialdehyde and phosphate. The product spontaneously undergoes cyclization to form 1-pyrroline-5-carboxylate. This Brucella suis (strain ATCC 23445 / NCTC 10510) protein is Gamma-glutamyl phosphate reductase.